Consider the following 122-residue polypeptide: MIQMQTTLDVADNTGARSVMCIKVLGGSRRRYAGIGDIIKVSIKDAAPRGRVKKGDVYNAVVVRTAKGVRRPDGSLVRFDGNAAVLLNNKLEPIGTRIFGPVTRELRTERFMKIVSLAPEVL.

It belongs to the universal ribosomal protein uL14 family. Part of the 50S ribosomal subunit. Forms a cluster with proteins L3 and L19. In the 70S ribosome, L14 and L19 interact and together make contacts with the 16S rRNA in bridges B5 and B8.

Its function is as follows. Binds to 23S rRNA. Forms part of two intersubunit bridges in the 70S ribosome. The chain is Large ribosomal subunit protein uL14 from Dechloromonas aromatica (strain RCB).